A 100-amino-acid chain; its full sequence is Aspartyl/glutamyl-tRNA(Asn/Gln) amidotransferase subunit C (100 aa).

This sequence belongs to the GatC family. Heterotrimer of A, B and C subunits.

It catalyses the reaction L-glutamyl-tRNA(Gln) + L-glutamine + ATP + H2O = L-glutaminyl-tRNA(Gln) + L-glutamate + ADP + phosphate + H(+). It carries out the reaction L-aspartyl-tRNA(Asn) + L-glutamine + ATP + H2O = L-asparaginyl-tRNA(Asn) + L-glutamate + ADP + phosphate + 2 H(+). Allows the formation of correctly charged Asn-tRNA(Asn) or Gln-tRNA(Gln) through the transamidation of misacylated Asp-tRNA(Asn) or Glu-tRNA(Gln) in organisms which lack either or both of asparaginyl-tRNA or glutaminyl-tRNA synthetases. The reaction takes place in the presence of glutamine and ATP through an activated phospho-Asp-tRNA(Asn) or phospho-Glu-tRNA(Gln). This is Aspartyl/glutamyl-tRNA(Asn/Gln) amidotransferase subunit C from Novosphingobium aromaticivorans (strain ATCC 700278 / DSM 12444 / CCUG 56034 / CIP 105152 / NBRC 16084 / F199).